Consider the following 531-residue polypeptide: SWI/SNF-related matrix-associated actin-dependent regulator of chromatin subfamily D member 2 (531 aa).

Arg-81 and Arg-104 each carry asymmetric dimethylarginine. Ser-203 is modified (phosphoserine). Residues 205-227 form a disordered region; the sequence is SKAEGDTAGTTGTPGGTPAGDKV. Thr-217 carries the phosphothreonine modification. A Glycyl lysine isopeptide (Lys-Gly) (interchain with G-Cter in SUMO2) cross-link involves residue Lys-226. One can recognise an SWIB/MDM2 domain in the interval 306-383; sequence HQPPQYKLDP…PMKLAGLLQH (78 aa).

This sequence belongs to the SMARCD family. Component of the multiprotein chromatin-remodeling complexes SWI/SNF: SWI/SNF-A (BAF), SWI/SNF-B (PBAF) and related complexes. The canonical complex contains a catalytic subunit (either SMARCA4/BRG1/BAF190A or SMARCA2/BRM/BAF190B), and at least SMARCE1, ACTL6A/BAF53, SMARCC1/BAF155, SMARCC2/BAF170, and SMARCB1/SNF5/BAF47. Other subunits specific to each of the complexes may also be present permitting several possible combinations developmentally and tissue specific. Component of the BAF complex, which includes at least actin (ACTB), ARID1A/BAF250A, ARID1B/BAF250B, SMARCA2/BRM, SMARCA4/BRG1, ACTL6A/BAF53, ACTL6B/BAF53B, SMARCE1/BAF57, SMARCC1/BAF155, SMARCC2/BAF170, SMARCB1/SNF5/INI1, and one or more SMARCD1/BAF60A, SMARCD2/BAF60B, or SMARCD3/BAF60C. In muscle cells, the BAF complex also contains DPF3. Component of the SWI/SNF-B (PBAF) chromatin remodeling complex, at least composed of SMARCA4/BRG1, SMARCB1/BAF47/SNF5, ACTL6A/BAF53A or ACTL6B/BAF53B, SMARCE1/BAF57, SMARCD1/BAF60A, SMARCD2/BAF60B, perhaps SMARCD3/BAF60C, SMARCC1/BAF155, SMARCC2/BAF170, PBRM1/BAF180, ARID2/BAF200 and actin (ACTB). Interacts with UNKL. Interacts with CEBPE. In terms of processing, ubiquitinated through a signaling process involving RAC1 and the RING finger protein UNKL.

It localises to the nucleus. Its function is as follows. Involved in transcriptional activation and repression of select genes by chromatin remodeling (alteration of DNA-nucleosome topology). Component of SWI/SNF chromatin remodeling complexes that carry out key enzymatic activities, changing chromatin structure by altering DNA-histone contacts within a nucleosome in an ATP-dependent manner. Critical regulator of myeloid differentiation, controlling granulocytopoiesis and the expression of genes involved in neutrophil granule formation. In Bos taurus (Bovine), this protein is SWI/SNF-related matrix-associated actin-dependent regulator of chromatin subfamily D member 2 (SMARCD2).